The primary structure comprises 134 residues: Arsenate reductase (134 aa).

Catalysis depends on nucleophile residues Cys-11, Cys-83, and Cys-90. 2 disulfides stabilise this stretch: Cys-11/Cys-83 and Cys-83/Cys-90.

The protein belongs to the low molecular weight phosphotyrosine protein phosphatase family. Thioredoxin-coupled ArsC subfamily.

It is found in the cytoplasm. The enzyme catalyses arsenate + [thioredoxin]-dithiol + H(+) = arsenite + [thioredoxin]-disulfide + H2O. Its function is as follows. Catalyzes the reduction of arsenate [As(V)] to arsenite [As(III)]. This is Arsenate reductase from Bacillus cereus (strain ATCC 14579 / DSM 31 / CCUG 7414 / JCM 2152 / NBRC 15305 / NCIMB 9373 / NCTC 2599 / NRRL B-3711).